We begin with the raw amino-acid sequence, 834 residues long: Periplasmic nitrate reductase (834 aa).

The tat-type signal signal peptide spans 1 to 31; the sequence is MTGELTRREMLKAHAAGIAAATAGIALPAAA. The 4Fe-4S Mo/W bis-MGD-type domain occupies 43 to 99; sequence ITWSKAPCRFCGTGCGVMVGVKEGQVVATHGDMQAEVNRGLNCIKGYFLSKIMYGTD. [4Fe-4S] cluster is bound by residues cysteine 50, cysteine 53, cysteine 57, and cysteine 85. Residues lysine 87, glutamine 154, asparagine 179, cysteine 183, 216–223, 247–251, 266–268, methionine 377, glutamine 381, asparagine 487, 513–514, lysine 536, aspartate 563, and 723–732 contribute to the Mo-bis(molybdopterin guanine dinucleotide) site; these read WGSNMAEM, STFTH, GTD, SD, and TGRVLEHWHS. Tryptophan 799 contacts substrate. Residues asparagine 807 and lysine 824 each coordinate Mo-bis(molybdopterin guanine dinucleotide).

This sequence belongs to the prokaryotic molybdopterin-containing oxidoreductase family. NasA/NapA/NarB subfamily. Component of the periplasmic nitrate reductase NapAB complex composed of NapA and NapB. [4Fe-4S] cluster is required as a cofactor. Requires Mo-bis(molybdopterin guanine dinucleotide) as cofactor. Post-translationally, predicted to be exported by the Tat system. The position of the signal peptide cleavage has not been experimentally proven.

Its subcellular location is the periplasm. It carries out the reaction 2 Fe(II)-[cytochrome] + nitrate + 2 H(+) = 2 Fe(III)-[cytochrome] + nitrite + H2O. Functionally, catalytic subunit of the periplasmic nitrate reductase complex NapAB. Receives electrons from NapB and catalyzes the reduction of nitrate to nitrite. In Rhizobium meliloti (strain 1021) (Ensifer meliloti), this protein is Periplasmic nitrate reductase.